The following is a 972-amino-acid chain: POM121-like protein 2 (972 aa).

Disordered stretches follow at residues 1-67 (MGSY…PANP), 281-302 (LKKA…SGQL), 328-359 (TEED…IPEM), 406-431 (GISS…PVTD), 676-726 (LGLS…AIDG), and 953-972 (SKTL…TYKK). Residues 40 to 57 (RVQHVHRAQPARRHRPAR) show a composition bias toward basic residues. 2 stretches are compositionally biased toward polar residues: residues 287–302 (SPNS…SGQL) and 339–352 (VPSN…TGTA). Residues 413–431 (PSIASTQASPSSPTTPVTD) show a composition bias toward low complexity. The span at 677-696 (GLSSTNQPPVTSSNSNVTSA) shows a compositional bias: polar residues. Over residues 697-706 (LTSSLGSSPK) the composition is skewed to low complexity.

It belongs to the POM121 family.

The sequence is that of POM121-like protein 2 (Pom121l2) from Mus musculus (Mouse).